A 228-amino-acid chain; its full sequence is Glucose-induced degradation protein 8 homolog (228 aa).

Residues 29-61 (SKSDLNKLVMNYLVIEGYQEAAAKFQEESSTQT) form the LisH domain. Residues 67–124 (SIADRMAIRSAIQCGDVEKGIEIVNDLNPEILDTNPQLYFHLQQQKLIELIRKGMTAE) form the CTLH domain.

Belongs to the GID8 family.

It is found in the cytoplasm. Its subcellular location is the nucleus. Functionally, core component of the CTLH E3 ubiquitin-protein ligase complex that mediates ubiquitination and subsequent proteasomal degradation of target proteins. Acts as a positive regulator of Wnt signaling pathway by promoting beta-catenin (CTNNB1) nuclear accumulation. The polypeptide is Glucose-induced degradation protein 8 homolog (Dictyostelium discoideum (Social amoeba)).